Consider the following 101-residue polypeptide: MSGDGHDGDEVLDELFEVIESRKEELPDGSYTASLFTHEKGENAVLEKLGEETTELLLAAKDDDDEELAHEAADIVYHLLVLLSMKDMELADLRAELRKRR.

The protein belongs to the PRA-PH family.

The protein localises to the cytoplasm. It catalyses the reaction 1-(5-phospho-beta-D-ribosyl)-ATP + H2O = 1-(5-phospho-beta-D-ribosyl)-5'-AMP + diphosphate + H(+). It participates in amino-acid biosynthesis; L-histidine biosynthesis; L-histidine from 5-phospho-alpha-D-ribose 1-diphosphate: step 2/9. The polypeptide is Phosphoribosyl-ATP pyrophosphatase (Natronomonas pharaonis (strain ATCC 35678 / DSM 2160 / CIP 103997 / JCM 8858 / NBRC 14720 / NCIMB 2260 / Gabara) (Halobacterium pharaonis)).